The following is a 270-amino-acid chain: Acyl-[acyl-carrier-protein]--UDP-N-acetylglucosamine O-acyltransferase (270 aa).

Belongs to the transferase hexapeptide repeat family. LpxA subfamily. Homotrimer.

The protein localises to the cytoplasm. It carries out the reaction a (3R)-hydroxyacyl-[ACP] + UDP-N-acetyl-alpha-D-glucosamine = a UDP-3-O-[(3R)-3-hydroxyacyl]-N-acetyl-alpha-D-glucosamine + holo-[ACP]. It functions in the pathway glycolipid biosynthesis; lipid IV(A) biosynthesis; lipid IV(A) from (3R)-3-hydroxytetradecanoyl-[acyl-carrier-protein] and UDP-N-acetyl-alpha-D-glucosamine: step 1/6. Functionally, involved in the biosynthesis of lipid A, a phosphorylated glycolipid that anchors the lipopolysaccharide to the outer membrane of the cell. The chain is Acyl-[acyl-carrier-protein]--UDP-N-acetylglucosamine O-acyltransferase from Helicobacter pylori (strain HPAG1).